Here is a 145-residue protein sequence, read N- to C-terminus: UPF0201 protein LS215_1276 (145 aa).

It belongs to the UPF0201 family.

The chain is UPF0201 protein LS215_1276 from Saccharolobus islandicus (strain L.S.2.15 / Lassen #1) (Sulfolobus islandicus).